Here is a 260-residue protein sequence, read N- to C-terminus: Large ribosomal subunit protein uL2 (260 aa).

Residues 208–230 are disordered; sequence EHPHGGGNHQHIGHPSTVRRDAS.

Belongs to the universal ribosomal protein uL2 family.

The protein resides in the cytoplasm. In Caenorhabditis elegans, this protein is Large ribosomal subunit protein uL2.